The chain runs to 214 residues: MGGRPPPSVGSVVVADTTMFTDAKLREVLGARSLEEAARIMARILARASRMGLTVYITPSVRAEIERFMLGNGVHPTTIARLMAWVRVKPPTTHELRLPAAMFRRYVETVRARLDKGLRVAEDHVRRALRSRDEEGDIVRSLREKYREYTRKGMLDSVEDVDTLLLALELGAAIVTSDEGLRRAAEDLGLTVLTPVELLEYILALEEEVKSVEE.

The protein belongs to the HARP family.

It carries out the reaction Endonucleolytic cleavage of RNA, removing 5'-extranucleotides from tRNA precursor.. In terms of biological role, RNA-free RNase P that catalyzes the removal of the 5'-leader sequence from pre-tRNA to produce the mature 5'-terminus. The sequence is that of RNA-free ribonuclease P from Aeropyrum pernix (strain ATCC 700893 / DSM 11879 / JCM 9820 / NBRC 100138 / K1).